The following is a 355-amino-acid chain: Trans-enoyl reductase (355 aa).

45-48 (VDTK) serves as a coordination point for NADP(+). 131 to 138 (ISFMTTGL) provides a ligand contact to substrate. NADP(+) is bound by residues 166–169 (SSAT), 189–192 (SPRN), Tyr207, and 254–255 (LE). 275–279 (GPQML) is a binding site for substrate. 344-345 (IS) provides a ligand contact to NADP(+).

The protein belongs to the zinc-containing alcohol dehydrogenase family. Monomer.

It catalyses the reaction L-serine + 7 malonyl-CoA + acetyl-CoA + 2 S-adenosyl-L-methionine + ATP + 8 NADPH + 11 H(+) = (5S)-3-[(2E,6R,8E,10E,12E)-2,6-dimethyltetradeca-2,8,10,12-tetraenoyl]-5-(hydroxymethyl)pyrrolidine-2,4-dione + AMP + 2 S-adenosyl-L-homocysteine + 7 CO2 + diphosphate + 8 NADP(+) + 8 CoA + 6 H2O. The protein operates within mycotoxin biosynthesis. In terms of biological role, hybrid PKS-NRPS synthetase; part of the gene cluster that mediates the biosynthesis of trichosetin, a trans-fused decalin-containing tetramic acid with antimicrobial activity. The PKS module of PKS-NRPS1 together with the enoylreductase (ER) catalyze the formation of the polyketide unit which is then conjugated to L-serine by the condensation domain of the PKS-NRPS1 NRPS module. Activity of the Dieckmann cyclase domain (RED) results in release of the Dieckmann product intermediate. Diels-Alderase (DA) is involved in endo-selective Diels-Alder cycloaddition to form the decalin ring, leading to the production of N-desmethylequisetin also called trichosetin. The cluster does not contain the equisetin N-methyltransferase and consequently, trichosetin is isolated as final product. In Gibberella fujikuroi (strain CBS 195.34 / IMI 58289 / NRRL A-6831) (Bakanae and foot rot disease fungus), this protein is Trans-enoyl reductase.